We begin with the raw amino-acid sequence, 476 residues long: Aspartyl/glutamyl-tRNA(Asn/Gln) amidotransferase subunit B (476 aa).

Belongs to the GatB/GatE family. GatB subfamily. As to quaternary structure, heterotrimer of A, B and C subunits.

The catalysed reaction is L-glutamyl-tRNA(Gln) + L-glutamine + ATP + H2O = L-glutaminyl-tRNA(Gln) + L-glutamate + ADP + phosphate + H(+). It catalyses the reaction L-aspartyl-tRNA(Asn) + L-glutamine + ATP + H2O = L-asparaginyl-tRNA(Asn) + L-glutamate + ADP + phosphate + 2 H(+). Its function is as follows. Allows the formation of correctly charged Asn-tRNA(Asn) or Gln-tRNA(Gln) through the transamidation of misacylated Asp-tRNA(Asn) or Glu-tRNA(Gln) in organisms which lack either or both of asparaginyl-tRNA or glutaminyl-tRNA synthetases. The reaction takes place in the presence of glutamine and ATP through an activated phospho-Asp-tRNA(Asn) or phospho-Glu-tRNA(Gln). In Enterococcus faecalis (strain ATCC 700802 / V583), this protein is Aspartyl/glutamyl-tRNA(Asn/Gln) amidotransferase subunit B.